Consider the following 263-residue polypeptide: Lens fiber major intrinsic protein (263 aa).

Topologically, residues methionine 1–phenylalanine 9 are cytoplasmic. The helical transmembrane segment at tryptophan 10 to glycine 29 threads the bilayer. Over alanine 30–valine 41 the chain is Extracellular. The chain crosses the membrane as a helical span at residues leucine 42 to isoleucine 59. Topologically, residues glycine 60–histidine 61 are cytoplasmic. The discontinuously helical intramembrane region spans valine 62–isoleucine 77. Positions asparagine 68–alanine 70 match the NPA 1 motif. Residues glycine 78 to serine 82 lie on the Cytoplasmic side of the membrane. The helical transmembrane segment at leucine 83 to glycine 106 threads the bilayer. The Extracellular portion of the chain corresponds to valine 107–leucine 127. The chain crosses the membrane as a helical span at residues glycine 128–threonine 148. The Cytoplasmic portion of the chain corresponds to tyrosine 149 to arginine 156. Residues leucine 157–glycine 175 form a helical membrane-spanning segment. At leucine 176–tyrosine 178 the chain is on the extracellular side. An intramembrane region (discontinuously helical) is located at residues threonine 179–valine 193. An NPA 2 motif is present at residues asparagine 184 to alanine 186. Over leucine 194–asparagine 200 the chain is Extracellular. A helical transmembrane segment spans residues histidine 201–isoleucine 222. The Cytoplasmic portion of the chain corresponds to leucine 223–leucine 263. The tract at residues methionine 227 to leucine 237 is interaction with CALM. The disordered stretch occupies residues arginine 241–leucine 263.

The protein belongs to the MIP/aquaporin (TC 1.A.8) family. As to quaternary structure, homotetramer; each monomer provides an independent water pore. Two homotetramers on opposing membranes can dimerize, forming a cell-cell junction. Interacts with CALM; the calcium-calmodulin/CALM complex interacts with the cytoplasmic domains of two aquaporins, leading to channel closure.

The protein localises to the cell membrane. The protein resides in the cell junction. It catalyses the reaction H2O(in) = H2O(out). The water channel activity is inhibited by calcium through calmodulin/CALM. Aquaporins form homotetrameric transmembrane channels, with each monomer independently mediating water transport across the plasma membrane along its osmotic gradient. Specifically expressed in lens fiber cells, this aquaporin is crucial for maintaining lens water homeostasis and transparency. Beyond water permeability, it also acts as a cell-to-cell adhesion molecule, forming thin junctions between lens fiber cells that are essential for maintaining the ordered structure and transparency of the lens. The protein is Lens fiber major intrinsic protein of Lithobates pipiens (Northern leopard frog).